The following is an 873-amino-acid chain: Aminopeptidase M1-D (873 aa).

Positions 96–203 (LGEGVLAMRF…MSTYLVAIVV (108 aa)) are required for membrane association. Substrate contacts are provided by residues glutamate 136 and 269-273 (GAMEN). Histidine 305 lines the Zn(2+) pocket. The active-site Proton acceptor is glutamate 306. Residues histidine 309 and glutamate 328 each coordinate Zn(2+). The Dileucine internalization motif motif lies at 721–722 (LL).

It belongs to the peptidase M1 family. As to quaternary structure, homodimer. Zn(2+) serves as cofactor.

The protein resides in the membrane. It localises to the microsome membrane. The protein localises to the cytoplasm. The catalysed reaction is Release of an N-terminal amino acid, Xaa-|-Yaa- from a peptide, amide or arylamide. Xaa is preferably Ala, but may be most amino acids including Pro (slow action). When a terminal hydrophobic residue is followed by a prolyl residue, the two may be released as an intact Xaa-Pro dipeptide.. In Oryza sativa subsp. japonica (Rice), this protein is Aminopeptidase M1-D.